Here is a 599-residue protein sequence, read N- to C-terminus: rRNA (cytosine-C(5))-methyltransferase NOP2C (599 aa).

Residues 158–265 (PKEVLVSRKC…IAVDLNHRVF (108 aa)) form the PUA domain. S-adenosyl-L-methionine is bound by residues 304-310 (CAAPGGK), aspartate 328, and aspartate 355. Residues 372-454 (LINGDNSSSM…GGRAGKSQGF (83 aa)) are disordered. Residues 378 to 388 (SSSMTSHSELS) are compositionally biased toward low complexity. Residues 399-412 (RRSEADKSCEKNDS) show a composition bias toward basic and acidic residues. Polar residues predominate over residues 413–424 (TEQPNGGDNVSQ). Residues 428–438 (RKNKGRLKNGR) are compositionally biased toward basic residues. Aspartate 465 is an S-adenosyl-L-methionine binding site. Cysteine 516 (nucleophile) is an active-site residue.

The protein belongs to the class I-like SAM-binding methyltransferase superfamily. RsmB/NOP family.

The protein localises to the nucleus. It localises to the nucleolus. The enzyme catalyses a cytidine in rRNA + S-adenosyl-L-methionine = a 5-methylcytidine in rRNA + S-adenosyl-L-homocysteine + H(+). In terms of biological role, involved in ribosomal large subunit assembly. S-adenosyl-L-methionine-dependent methyltransferase that may methylates the C(5) position of cytosine in rRNA. May play a role in the regulation of the cell cycle and the increased nucleolar activity that is associated with the cell proliferation. Seems involved in the regulation of cell proliferation. The chain is rRNA (cytosine-C(5))-methyltransferase NOP2C from Arabidopsis thaliana (Mouse-ear cress).